Here is a 344-residue protein sequence, read N- to C-terminus: Lysophosphatidic acid receptor 6 (344 aa).

At 1–25 (MVSSNGSQCPYDDSFKYTLYGCMFS) the chain is on the extracellular side. A glycan (N-linked (GlcNAc...) asparagine) is linked at asparagine 5. A helical transmembrane segment spans residues 26–46 (MVFVLGLISNCVAIYIFICAL). The Cytoplasmic segment spans residues 47 to 56 (KVRNETTTYM). A helical membrane pass occupies residues 57 to 77 (INLAMSDLLFVFTLPFRIFYF). Residues 78–90 (ATRNWPFGDLLCK) are Extracellular-facing. A disulfide bridge links cysteine 89 with cysteine 168. Residues 91-111 (ISVMLFYTNMYGSILFLTCIS) form a helical membrane-spanning segment. At 112-134 (VDRFLAIVYPFKSKTLRTKRNAK) the chain is on the cytoplasmic side. The chain crosses the membrane as a helical span at residues 135-155 (IVCIAVWFTVMGGSAPAVFFQ). The Extracellular portion of the chain corresponds to 156-183 (STHSQGNNTSEACFENFPAATWKTYLSR). Asparagine 162 and asparagine 163 each carry an N-linked (GlcNAc...) asparagine glycan. A helical membrane pass occupies residues 184–204 (IVIFIEIVGFFIPLILNVTCS). At 205 to 230 (SMVLRTLNKPVTLSRSKMNKTKVLKM) the chain is on the cytoplasmic side. Residues 231 to 251 (IFVHLVIFCFCFVPYNINLIL) traverse the membrane as a helical segment. Over 252–272 (YSLMRTQTFVNCSVVAAVRTM) the chain is Extracellular. Asparagine 262 is a glycosylation site (N-linked (GlcNAc...) asparagine). The chain crosses the membrane as a helical span at residues 273 to 293 (YPITLCIAVSNCCFDPIVYYF). The S-palmitoyl cysteine moiety is linked to residue cysteine 284. Residues 294-344 (TSDTIQNSIKMKNWSVRRSDSRFSEVQGTENFIQHNLQTLKNKIFDNESAI) lie on the Cytoplasmic side of the membrane.

Belongs to the G-protein coupled receptor 1 family. As to expression, ubiquitously expressed. Detected in the hair follicles and skin (at protein level).

Its subcellular location is the cell membrane. Binds to oleoyl-L-alpha-lysophosphatidic acid (LPA). Intracellular cAMP is involved in the receptor activation. Important for the maintenance of hair growth and texture. This is Lysophosphatidic acid receptor 6 (Lpar6) from Mus musculus (Mouse).